A 296-amino-acid polypeptide reads, in one-letter code: Diguanylate cyclase DgcS (296 aa).

A GGDEF domain is found at 165 to 293 (GSVSLIVLDL…GRNCYKLSPT (129 aa)). Positions 173, 174, and 216 each coordinate Mg(2+). Residue aspartate 216 is part of the active site.

Mg(2+) is required as a cofactor.

It carries out the reaction 2 GTP = 3',3'-c-di-GMP + 2 diphosphate. Catalyzes the synthesis of cyclic-di-GMP (c-di-GMP) via the condensation of 2 GTP molecules. May be involved in the regulation of formation of solid surface-associated biofilms and pellicles according to environmental conditions. The sequence is that of Diguanylate cyclase DgcS from Shewanella oneidensis (strain ATCC 700550 / JCM 31522 / CIP 106686 / LMG 19005 / NCIMB 14063 / MR-1).